The primary structure comprises 766 residues: LPS-assembly protein LptD (766 aa).

The first 18 residues, 1-18, serve as a signal peptide directing secretion; it reads MQIRYFLALSLLPNIVLA.

The protein belongs to the LptD family. As to quaternary structure, component of the lipopolysaccharide transport and assembly complex. Interacts with LptE and LptA.

The protein resides in the cell outer membrane. Together with LptE, is involved in the assembly of lipopolysaccharide (LPS) at the surface of the outer membrane. This chain is LPS-assembly protein LptD, found in Shewanella frigidimarina (strain NCIMB 400).